We begin with the raw amino-acid sequence, 314 residues long: Testis-specific Y-encoded protein 9 (314 aa).

Belongs to the nucleosome assembly protein (NAP) family.

The protein resides in the cytoplasm. It is found in the nucleus. May be involved in sperm differentiation and proliferation. The polypeptide is Testis-specific Y-encoded protein 9 (Homo sapiens (Human)).